Here is a 111-residue protein sequence, read N- to C-terminus: Large ribosomal subunit protein uL22 (111 aa).

The protein belongs to the universal ribosomal protein uL22 family. Part of the 50S ribosomal subunit.

In terms of biological role, this protein binds specifically to 23S rRNA; its binding is stimulated by other ribosomal proteins, e.g. L4, L17, and L20. It is important during the early stages of 50S assembly. It makes multiple contacts with different domains of the 23S rRNA in the assembled 50S subunit and ribosome. The globular domain of the protein is located near the polypeptide exit tunnel on the outside of the subunit, while an extended beta-hairpin is found that lines the wall of the exit tunnel in the center of the 70S ribosome. The polypeptide is Large ribosomal subunit protein uL22 (Clostridium novyi (strain NT)).